We begin with the raw amino-acid sequence, 148 residues long: 3-dehydroquinate dehydratase (148 aa).

Catalysis depends on tyrosine 23, which acts as the Proton acceptor. 3 residues coordinate substrate: asparagine 74, histidine 80, and aspartate 87. Histidine 100 (proton donor) is an active-site residue. Substrate contacts are provided by residues 101 to 102 (IS) and arginine 111.

This sequence belongs to the type-II 3-dehydroquinase family. Homododecamer.

It catalyses the reaction 3-dehydroquinate = 3-dehydroshikimate + H2O. It functions in the pathway metabolic intermediate biosynthesis; chorismate biosynthesis; chorismate from D-erythrose 4-phosphate and phosphoenolpyruvate: step 3/7. Catalyzes a trans-dehydration via an enolate intermediate. In Anoxybacillus flavithermus (strain DSM 21510 / WK1), this protein is 3-dehydroquinate dehydratase.